A 254-amino-acid chain; its full sequence is uncharacterized protein (254 aa).

Helical transmembrane passes span 41-61 (VFVFIFFLLAATISFTQIKII), 64-84 (IFQAPAIGIKFLQLAPGEYFF), 91-111 (IYCGIVATTPFGVYQVILYIL), 125-145 (ILIGSIVLFIVGGIFAYFVLA), 146-166 (PAALNFLISYGADIVEPLWSF), 172-192 (FILLLLFSTGLAFEIPIIQLL), 204-224 (MLLAWRYIIIISTIIGAVLTP), and 232-252 (IIMSSAVLALYFSGVIILFLL).

The protein belongs to the TatC family.

It is found in the plastid. Its subcellular location is the chloroplast membrane. This is an uncharacterized protein from Porphyra purpurea (Red seaweed).